Here is a 27-residue protein sequence, read N- to C-terminus: Nemertide alpha-8 (27 aa).

Cystine bridges form between Cys2-Cys16, Cys9-Cys20, and Cys15-Cys26.

It belongs to the nemertide family. In terms of tissue distribution, confined to the epidermis and to the mucus layer.

The protein resides in the secreted. Its function is as follows. Highly potent toxin against both insect and some mammalian sodium channels (Nav). It potently inhibits inactivation of insect sodium channels of B.germanica (BgNav1) and also delays the inactivation of mammalian Nav with potent activity on Nav1.3/SCN3A and Nav1.4/SCN4A. 1 uM is enough to completely inhibits the inactivation, resulting in sustained non-inactivating currents. In addition, the toxin significantly enhances the recovery from inactivation, and the open state is not required for the toxin to interact with the channel. In vivo, injection into brine shrimp (Artemia salina) stops movement or causes death after 24 hours (EC(50)=0.4 uM). The polypeptide is Nemertide alpha-8 (Riseriellus occultus (Ribbon worm)).